Reading from the N-terminus, the 104-residue chain is L-rhamnose mutarotase (104 aa).

Tyr-18 provides a ligand contact to substrate. His-22 serves as the catalytic Proton donor. Substrate is bound by residues Tyr-41 and 76 to 77 (WW).

Belongs to the rhamnose mutarotase family. As to quaternary structure, homodimer.

The protein resides in the cytoplasm. It catalyses the reaction alpha-L-rhamnose = beta-L-rhamnose. Its pathway is carbohydrate metabolism; L-rhamnose metabolism. In terms of biological role, involved in the anomeric conversion of L-rhamnose. In Sinorhizobium fredii (strain NBRC 101917 / NGR234), this protein is L-rhamnose mutarotase.